The following is a 639-amino-acid chain: Uridine permease (639 aa).

Residues 1–37 are disordered; that stretch reads MPVSDSGFDNSSKTMKDDTIPTEDYEEITKESEMGDA. The Cytoplasmic segment spans residues 1-162; that stretch reads MPVSDSGFDN…LQLGLNWWQT (162 aa). Thr54 bears the Phosphothreonine mark. Ser56 is modified (phosphoserine). The helical transmembrane segment at 163–180 threads the bilayer; sequence WICIWVGYTFVAFFLILG. The Extracellular segment spans residues 181-200; the sequence is SKVGNNYHISFPISSRVSFG. A helical membrane pass occupies residues 201–225; it reads IYFSIWIVINRVVMACVWNSTLAYI. Over 226-259 the chain is Cytoplasmic; that stretch reads GSQCVQLMLKAIFGTNLNTRIKDTIKNPNLTNFE. Residues 260–276 form a helical membrane-spanning segment; the sequence is FMCFMVFWVACLPFLWF. The Extracellular portion of the chain corresponds to 277–283; the sequence is PPDKLRH. Residues 284–305 traverse the membrane as a helical segment; that stretch reads IFALKSAITPFAAFGFLIWTLC. Residues 306–367 lie on the Cytoplasmic side of the membrane; it reads KAKGHLALGS…KTYKSSVYSQ (62 aa). The helical transmembrane segment at 368 to 392 threads the bilayer; sequence LIALPVCYAIISLIGILSVSAAYTL. The Extracellular segment spans residues 393–416; sequence YGVNYWSPLDILNRYLDNYTSGNR. A helical membrane pass occupies residues 417–435; it reads AGVFLISFIFAFDQLGANL. Topologically, residues 436 to 460 are cytoplasmic; that stretch reads SGNSIPAGTDLTALLPKFINIRRGS. Residues 461–477 traverse the membrane as a helical segment; the sequence is YICALISLAICPWDLLS. The Extracellular portion of the chain corresponds to 478-483; the sequence is SSSKFT. A helical membrane pass occupies residues 484–507; it reads TALAAYAVFLSAIAGVISADYFIV. The Cytoplasmic segment spans residues 508–537; the sequence is RKGYVNIFHCYTDKPGSYYMYNKYGTNWRA. Residues 538–562 traverse the membrane as a helical segment; that stretch reads VVAYIFGIAPNFAGFLGSVGVSVPI. Over 563–572 the chain is Extracellular; that stretch reads GAMKVYYLNY. Residues 573 to 590 form a helical membrane-spanning segment; sequence FVGYLLAALSYCILVYFY. Residues 591–639 are Cytoplasmic-facing; that stretch reads PIKGIPGDAKITDRKWLEEWVEVEEFGTEREAFEEYGGVSTGYEKIRYI. Lys635 participates in a covalent cross-link: Glycyl lysine isopeptide (Lys-Gly) (interchain with G-Cter in ubiquitin).

It belongs to the purine-cytosine permease (2.A.39) family.

It localises to the membrane. High-affinity transport of uridine. This is Uridine permease (FUI1) from Saccharomyces cerevisiae (strain ATCC 204508 / S288c) (Baker's yeast).